The primary structure comprises 253 residues: tRNA (guanine-N(7)-)-methyltransferase (253 aa).

A compositionally biased stretch (pro residues) spans 1-12; it reads MSQTPMPQPDQA. The tract at residues 1–39 is disordered; it reads MSQTPMPQPDQAPPVDVGQPVDEAEAKRRRFKTHGRKKG. Positions 27–39 are enriched in basic residues; that stretch reads KRRRFKTHGRKKG. S-adenosyl-L-methionine is bound by residues glutamate 84, aspartate 109, asparagine 136, and aspartate 159. Residue aspartate 159 is part of the active site. Residues lysine 163, aspartate 195, and 232–235 contribute to the substrate site; that span reads TNFE.

Belongs to the class I-like SAM-binding methyltransferase superfamily. TrmB family.

The enzyme catalyses guanosine(46) in tRNA + S-adenosyl-L-methionine = N(7)-methylguanosine(46) in tRNA + S-adenosyl-L-homocysteine. It participates in tRNA modification; N(7)-methylguanine-tRNA biosynthesis. Functionally, catalyzes the formation of N(7)-methylguanine at position 46 (m7G46) in tRNA. This is tRNA (guanine-N(7)-)-methyltransferase from Magnetococcus marinus (strain ATCC BAA-1437 / JCM 17883 / MC-1).